Consider the following 184-residue polypeptide: Large ribosomal subunit protein uL6 (184 aa).

The protein belongs to the universal ribosomal protein uL6 family. Part of the 50S ribosomal subunit.

Its function is as follows. This protein binds to the 23S rRNA, and is important in its secondary structure. It is located near the subunit interface in the base of the L7/L12 stalk, and near the tRNA binding site of the peptidyltransferase center. This chain is Large ribosomal subunit protein uL6, found in Pyrococcus furiosus (strain ATCC 43587 / DSM 3638 / JCM 8422 / Vc1).